Consider the following 253-residue polypeptide: UPF0280 protein MA_1715 (253 aa).

Belongs to the UPF0280 family.

In Methanosarcina acetivorans (strain ATCC 35395 / DSM 2834 / JCM 12185 / C2A), this protein is UPF0280 protein MA_1715.